The primary structure comprises 499 residues: Apolipoprotein N-acyltransferase (499 aa).

6 helical membrane-spanning segments follow: residues 18–38 (FSPYNFWPASIISIFGLLIIT), 50–70 (LGFLWGIGNFFNEIYWIYISI), 82–102 (IIIILLLSSYLSLYPTIFVIL), 105–125 (FFFPKINFFLFCVGAPSAWMI), 156–176 (PIIGVSGISYILIIISGMCVL), and 182–202 (SYYPIIFIIFIITLTYPLNFF). In terms of domain architecture, CN hydrolase spans 217-461 (IQGNISQHTY…NDFLLEEVFS (245 aa)). The active-site Proton acceptor is the Glu-257. Lys-320 is an active-site residue. The active-site Nucleophile is the Cys-372. The chain crosses the membrane as a helical span at residues 476–496 (LLFFSIICFIISFFIKIKLIF).

Belongs to the CN hydrolase family. Apolipoprotein N-acyltransferase subfamily.

Its subcellular location is the cell membrane. The catalysed reaction is N-terminal S-1,2-diacyl-sn-glyceryl-L-cysteinyl-[lipoprotein] + a glycerophospholipid = N-acyl-S-1,2-diacyl-sn-glyceryl-L-cysteinyl-[lipoprotein] + a 2-acyl-sn-glycero-3-phospholipid + H(+). It functions in the pathway protein modification; lipoprotein biosynthesis (N-acyl transfer). Its function is as follows. Catalyzes the phospholipid dependent N-acylation of the N-terminal cysteine of apolipoprotein, the last step in lipoprotein maturation. The chain is Apolipoprotein N-acyltransferase from Wigglesworthia glossinidia brevipalpis.